The chain runs to 209 residues: Large ribosomal subunit protein uL3 (209 aa).

Positions 132 to 153 are disordered; sequence ATHGNSLSHRVPGSIGQNQTPG. Q150 carries the post-translational modification N5-methylglutamine.

It belongs to the universal ribosomal protein uL3 family. In terms of assembly, part of the 50S ribosomal subunit. Forms a cluster with proteins L14 and L19. Methylated by PrmB.

One of the primary rRNA binding proteins, it binds directly near the 3'-end of the 23S rRNA, where it nucleates assembly of the 50S subunit. The polypeptide is Large ribosomal subunit protein uL3 (Enterobacter sp. (strain 638)).